We begin with the raw amino-acid sequence, 155 residues long: MAKLAVIRIRGRVNVKRPVRDTLAMLRLHRVNHCVIVDDTPSYLGMLQKAKDYITWGEINAETLAKLIRKRGRLIGNKPVTDEYVKEKLGMTIEEFAQKVINGEMSLKDLPNLKPVFRLHPPRGGFRGSKKRSFKEGGALGYRGEKINDLIERML.

This sequence belongs to the universal ribosomal protein uL30 family. In terms of assembly, part of the 50S ribosomal subunit.

This is Large ribosomal subunit protein uL30 from Pyrococcus abyssi (strain GE5 / Orsay).